A 606-amino-acid polypeptide reads, in one-letter code: Elongation factor 4 (606 aa).

Residues 7-189 form the tr-type G domain; it reads SRIRNFCIIA…AVVDRVPPPK (183 aa). Residues 19 to 24 and 136 to 139 contribute to the GTP site; these read DHGKST and NKID.

The protein belongs to the TRAFAC class translation factor GTPase superfamily. Classic translation factor GTPase family. LepA subfamily.

Its subcellular location is the cell inner membrane. The enzyme catalyses GTP + H2O = GDP + phosphate + H(+). Its function is as follows. Required for accurate and efficient protein synthesis under certain stress conditions. May act as a fidelity factor of the translation reaction, by catalyzing a one-codon backward translocation of tRNAs on improperly translocated ribosomes. Back-translocation proceeds from a post-translocation (POST) complex to a pre-translocation (PRE) complex, thus giving elongation factor G a second chance to translocate the tRNAs correctly. Binds to ribosomes in a GTP-dependent manner. This Parasynechococcus marenigrum (strain WH8102) protein is Elongation factor 4.